The following is a 147-amino-acid chain: 3-dehydroquinate dehydratase (147 aa).

Residue tyrosine 23 is the Proton acceptor of the active site. Residues asparagine 74, histidine 80, and aspartate 87 each contribute to the substrate site. Histidine 100 functions as the Proton donor in the catalytic mechanism. Substrate contacts are provided by residues 101–102 (LS) and arginine 111.

The protein belongs to the type-II 3-dehydroquinase family. As to quaternary structure, homododecamer.

It catalyses the reaction 3-dehydroquinate = 3-dehydroshikimate + H2O. The protein operates within metabolic intermediate biosynthesis; chorismate biosynthesis; chorismate from D-erythrose 4-phosphate and phosphoenolpyruvate: step 3/7. Its function is as follows. Catalyzes a trans-dehydration via an enolate intermediate. The polypeptide is 3-dehydroquinate dehydratase (Clostridium botulinum (strain ATCC 19397 / Type A)).